The following is a 219-amino-acid chain: uncharacterized protein (219 aa).

Residues 1-26 (MNDRGVPNSRTGPSLLALLPAANSYA) form the signal peptide. Disordered regions lie at residues 36–57 (AVGV…TRGG) and 88–219 (SGLG…GLCE). A compositionally biased stretch (low complexity) spans 127–173 (LSPPSALGSSPAGRGRPAPAIAAAKSSPLSASAAPGRCGARPRAPSR). Positions 176 to 202 (RERRPRGNPRAPLRRGARGRRRSHTRG) are enriched in basic residues.

This is an uncharacterized protein from Gallid herpesvirus 2 (strain Chicken/Md5/ATCC VR-987) (GaHV-2).